A 487-amino-acid polypeptide reads, in one-letter code: Lysine--tRNA ligase (487 aa).

2 residues coordinate Mg(2+): Glu-398 and Glu-405.

This sequence belongs to the class-II aminoacyl-tRNA synthetase family. As to quaternary structure, homodimer. It depends on Mg(2+) as a cofactor.

The protein localises to the cytoplasm. It catalyses the reaction tRNA(Lys) + L-lysine + ATP = L-lysyl-tRNA(Lys) + AMP + diphosphate. The chain is Lysine--tRNA ligase from Mycoplasma mobile (strain ATCC 43663 / 163K / NCTC 11711) (Mesomycoplasma mobile).